The following is a 317-amino-acid chain: tRNA dimethylallyltransferase (317 aa).

14 to 21 contributes to the ATP binding site; that stretch reads GPTAVGKT. 16 to 21 provides a ligand contact to substrate; sequence TAVGKT. The segment at 39–42 is interaction with substrate tRNA; the sequence is DSMQ.

This sequence belongs to the IPP transferase family. In terms of assembly, monomer. Mg(2+) serves as cofactor.

The catalysed reaction is adenosine(37) in tRNA + dimethylallyl diphosphate = N(6)-dimethylallyladenosine(37) in tRNA + diphosphate. Catalyzes the transfer of a dimethylallyl group onto the adenine at position 37 in tRNAs that read codons beginning with uridine, leading to the formation of N6-(dimethylallyl)adenosine (i(6)A). This chain is tRNA dimethylallyltransferase, found in Bacillus cereus (strain ATCC 14579 / DSM 31 / CCUG 7414 / JCM 2152 / NBRC 15305 / NCIMB 9373 / NCTC 2599 / NRRL B-3711).